We begin with the raw amino-acid sequence, 153 residues long: UPF0756 membrane protein Lm4b_01579 (153 aa).

The next 4 membrane-spanning stretches (helical) occupy residues 6 to 26 (MLFL…SLII), 54 to 74 (WGVT…QIGF), 80 to 100 (SFKS…SILA), and 117 to 137 (LVFG…GPVI).

This sequence belongs to the UPF0756 family.

The protein resides in the cell membrane. The protein is UPF0756 membrane protein Lm4b_01579 of Listeria monocytogenes serotype 4b (strain CLIP80459).